We begin with the raw amino-acid sequence, 166 residues long: NAD(P)H-quinone oxidoreductase subunit I, chloroplastic (166 aa).

2 4Fe-4S ferredoxin-type domains span residues 55–84 and 95–124; these read GRIHFEFDKCIACEVCVRVCPIDLPVVDWK and LNYSIDFGICIFCGNCVEYCPTNCLSMTEE. The [4Fe-4S] cluster site is built by Cys-64, Cys-67, Cys-70, Cys-74, Cys-104, Cys-107, Cys-110, and Cys-114.

This sequence belongs to the complex I 23 kDa subunit family. NDH is composed of at least 16 different subunits, 5 of which are encoded in the nucleus. Requires [4Fe-4S] cluster as cofactor.

Its subcellular location is the plastid. The protein localises to the chloroplast thylakoid membrane. The catalysed reaction is a plastoquinone + NADH + (n+1) H(+)(in) = a plastoquinol + NAD(+) + n H(+)(out). It catalyses the reaction a plastoquinone + NADPH + (n+1) H(+)(in) = a plastoquinol + NADP(+) + n H(+)(out). NDH shuttles electrons from NAD(P)H:plastoquinone, via FMN and iron-sulfur (Fe-S) centers, to quinones in the photosynthetic chain and possibly in a chloroplast respiratory chain. The immediate electron acceptor for the enzyme in this species is believed to be plastoquinone. Couples the redox reaction to proton translocation, and thus conserves the redox energy in a proton gradient. The polypeptide is NAD(P)H-quinone oxidoreductase subunit I, chloroplastic (Tridax balbisioides (Coatbuttons)).